The following is an 852-amino-acid chain: Lon protease homolog 2, peroxisomal (852 aa).

The residue at position 2 (S2) is an N-acetylserine. The Lon N-terminal domain occupies 13 to 222; it reads LPLLLTHESV…MTIPLLVRQI (210 aa). 375–382 contributes to the ATP binding site; that stretch reads GPPGVGKT. The region spanning 651-837 is the Lon proteolytic domain; it reads LSQPGVAIGL…DEVLNAAFDG (187 aa). Residues S743 and K786 contribute to the active site. A Microbody targeting signal motif is present at residues 850 to 852; that stretch reads SKL.

It belongs to the peptidase S16 family. Interacts with PEX5. Interacts with TYSND1. May interact with enzymes involved in beta-oxidation of fatty acids, including ACOX1/AOX.

The protein localises to the peroxisome matrix. It catalyses the reaction Hydrolysis of proteins in presence of ATP.. Functionally, ATP-dependent serine protease that mediates the selective degradation of misfolded and unassembled polypeptides in the peroxisomal matrix. Necessary for type 2 peroxisome targeting signal (PTS2)-containing protein processing and facilitates peroxisome matrix protein import. May indirectly regulate peroxisomal fatty acid beta-oxidation through degradation of the self-processed forms of TYSND1. In Rattus norvegicus (Rat), this protein is Lon protease homolog 2, peroxisomal (Lonp2).